Reading from the N-terminus, the 225-residue chain is 7-cyano-7-deazaguanine synthase (225 aa).

10–20 provides a ligand contact to ATP; the sequence is FSGGQDSTTLA. Residues cysteine 190, cysteine 205, cysteine 208, and cysteine 211 each coordinate Zn(2+).

Belongs to the QueC family. Zn(2+) serves as cofactor.

The catalysed reaction is 7-carboxy-7-deazaguanine + NH4(+) + ATP = 7-cyano-7-deazaguanine + ADP + phosphate + H2O + H(+). It functions in the pathway purine metabolism; 7-cyano-7-deazaguanine biosynthesis. Functionally, catalyzes the ATP-dependent conversion of 7-carboxy-7-deazaguanine (CDG) to 7-cyano-7-deazaguanine (preQ(0)). The protein is 7-cyano-7-deazaguanine synthase of Helicobacter pylori (strain J99 / ATCC 700824) (Campylobacter pylori J99).